A 661-amino-acid polypeptide reads, in one-letter code: Threonine--tRNA ligase (661 aa).

Residues 1–64 form the TGS domain; sequence MSHSVSLTFP…ADGKIEIVTR (64 aa). The tract at residues 245-547 is catalytic; it reads DHRRLGREMD…LLENYAGHMP (303 aa). Zn(2+)-binding residues include C341, H392, and H524.

It belongs to the class-II aminoacyl-tRNA synthetase family. Homodimer. Zn(2+) is required as a cofactor.

The protein localises to the cytoplasm. The catalysed reaction is tRNA(Thr) + L-threonine + ATP = L-threonyl-tRNA(Thr) + AMP + diphosphate + H(+). Functionally, catalyzes the attachment of threonine to tRNA(Thr) in a two-step reaction: L-threonine is first activated by ATP to form Thr-AMP and then transferred to the acceptor end of tRNA(Thr). Also edits incorrectly charged L-seryl-tRNA(Thr). The protein is Threonine--tRNA ligase of Sinorhizobium fredii (strain NBRC 101917 / NGR234).